Consider the following 248-residue polypeptide: Phycocyanobilin:ferredoxin oxidoreductase (248 aa).

It belongs to the HY2 family.

The catalysed reaction is (2R,3Z)-phycocyanobilin + 4 oxidized [2Fe-2S]-[ferredoxin] = biliverdin IXalpha + 4 reduced [2Fe-2S]-[ferredoxin] + 4 H(+). Its function is as follows. Catalyzes the four-electron reduction of biliverdin IX-alpha (2-electron reduction at both the A and D rings); the reaction proceeds via an isolatable 2-electron intermediate, 181,182-dihydrobiliverdin. This chain is Phycocyanobilin:ferredoxin oxidoreductase (pcyA), found in Synechocystis sp. (strain ATCC 27184 / PCC 6803 / Kazusa).